Here is a 117-residue protein sequence, read N- to C-terminus: UPF0321 protein PJ695.01c (117 aa).

The first 17 residues, 1–17 (MLLLLYICCLFLKFILA), serve as a signal peptide directing secretion. N-linked (GlcNAc...) asparagine glycosylation is found at Asn-39, Asn-65, Asn-71, and Asn-104.

The protein belongs to the UPF0321 family.

This is UPF0321 protein PJ695.01c from Schizosaccharomyces pombe (strain 972 / ATCC 24843) (Fission yeast).